A 176-amino-acid chain; its full sequence is Dual specificity phosphatase 28 (176 aa).

Residues 17 to 159 (PPLVRVAPSL…LQKYEEALQA (143 aa)) form the Tyrosine-protein phosphatase domain. Cys103 (phosphocysteine intermediate) is an active-site residue.

This sequence belongs to the protein-tyrosine phosphatase family. Non-receptor class dual specificity subfamily. Monomer.

The catalysed reaction is O-phospho-L-tyrosyl-[protein] + H2O = L-tyrosyl-[protein] + phosphate. The enzyme catalyses O-phospho-L-seryl-[protein] + H2O = L-seryl-[protein] + phosphate. It catalyses the reaction O-phospho-L-threonyl-[protein] + H2O = L-threonyl-[protein] + phosphate. Functionally, has phosphatase activity with the synthetic substrate 6,8-difluoro-4-methylumbelliferyl phosphate (in vitro). Has almost no detectable activity with phosphotyrosine, even less activity with phosphothreonine and displays complete lack of activity with phosphoserine. The poor activity with phosphotyrosine may be due to steric hindrance by bulky amino acid sidechains that obstruct access to the active site. The protein is Dual specificity phosphatase 28 (DUSP28) of Homo sapiens (Human).